We begin with the raw amino-acid sequence, 169 residues long: Large ribosomal subunit protein bL9 (169 aa).

Belongs to the bacterial ribosomal protein bL9 family.

Functionally, binds to the 23S rRNA. The protein is Large ribosomal subunit protein bL9 of Chlamydia pneumoniae (Chlamydophila pneumoniae).